The primary structure comprises 267 residues: Putative hydro-lyase RALTA_B1245 (267 aa).

It belongs to the D-glutamate cyclase family.

In Cupriavidus taiwanensis (strain DSM 17343 / BCRC 17206 / CCUG 44338 / CIP 107171 / LMG 19424 / R1) (Ralstonia taiwanensis (strain LMG 19424)), this protein is Putative hydro-lyase RALTA_B1245.